Reading from the N-terminus, the 565-residue chain is Proline--tRNA ligase (565 aa).

Belongs to the class-II aminoacyl-tRNA synthetase family. ProS type 1 subfamily. Homodimer.

The protein resides in the cytoplasm. The catalysed reaction is tRNA(Pro) + L-proline + ATP = L-prolyl-tRNA(Pro) + AMP + diphosphate. Catalyzes the attachment of proline to tRNA(Pro) in a two-step reaction: proline is first activated by ATP to form Pro-AMP and then transferred to the acceptor end of tRNA(Pro). As ProRS can inadvertently accommodate and process non-cognate amino acids such as alanine and cysteine, to avoid such errors it has two additional distinct editing activities against alanine. One activity is designated as 'pretransfer' editing and involves the tRNA(Pro)-independent hydrolysis of activated Ala-AMP. The other activity is designated 'posttransfer' editing and involves deacylation of mischarged Ala-tRNA(Pro). The misacylated Cys-tRNA(Pro) is not edited by ProRS. In Francisella tularensis subsp. mediasiatica (strain FSC147), this protein is Proline--tRNA ligase.